Reading from the N-terminus, the 500-residue chain is Glycerol kinase (500 aa).

Residue T12 coordinates ADP. The ATP site is built by T12, T13, and S14. Residue T12 coordinates sn-glycerol 3-phosphate. R16 serves as a coordination point for ADP. Sn-glycerol 3-phosphate is bound by residues R82, E83, Y134, and D243. Residues R82, E83, Y134, D243, and Q244 each contribute to the glycerol site. Residues T265 and G308 each contribute to the ADP site. ATP is bound by residues T265, G308, Q312, and G411. Residue G411 participates in ADP binding.

It belongs to the FGGY kinase family.

It catalyses the reaction glycerol + ATP = sn-glycerol 3-phosphate + ADP + H(+). Its pathway is polyol metabolism; glycerol degradation via glycerol kinase pathway; sn-glycerol 3-phosphate from glycerol: step 1/1. Its activity is regulated as follows. Inhibited by fructose 1,6-bisphosphate (FBP). In terms of biological role, key enzyme in the regulation of glycerol uptake and metabolism. Catalyzes the phosphorylation of glycerol to yield sn-glycerol 3-phosphate. The protein is Glycerol kinase of Chelativorans sp. (strain BNC1).